The following is a 177-amino-acid chain: Platelet glycoprotein IX (177 aa).

Positions 1–16 (MPAWGALFLLWATAEA) are cleaved as a signal peptide. Residues 17-51 (TKDCPSPCTCRALETMGLWVDCRGHGLTALPALPA) enclose the LRRNT domain. The Extracellular portion of the chain corresponds to 17–147 (TKDCPSPCTC…QLQASWVRPG (131 aa)). N-linked (GlcNAc...) asparagine glycosylation is present at asparagine 60. Residues 60–83 (NNSLQSVPPGAFDHLPQLQTLDVT) form an LRR repeat. Positions 85 to 137 (NPWHCDCSLTYLRLWLEDRTPEALLQVRCASPSLAAHGPLGRLTGYQLGSCGW) constitute an LRRCT domain. A helical membrane pass occupies residues 148 to 168 (VLWDVALVAVAALGLALLAGL). At 169–177 (LCATTEALD) the chain is on the cytoplasmic side.

Two GP-Ib beta are disulfide-linked to one GP-Ib alpha. GP-IX is complexed with the GP-Ib heterodimer via a non covalent linkage.

It is found in the membrane. The GPIb-V-IX complex functions as the vWF receptor and mediates vWF-dependent platelet adhesion to blood vessels. The adhesion of platelets to injured vascular surfaces in the arterial circulation is a critical initiating event in hemostasis. GP-IX may provide for membrane insertion and orientation of GP-Ib. This chain is Platelet glycoprotein IX (GP9), found in Homo sapiens (Human).